A 179-amino-acid polypeptide reads, in one-letter code: Large ribosomal subunit protein uL5 (179 aa).

It belongs to the universal ribosomal protein uL5 family. Part of the 50S ribosomal subunit; part of the 5S rRNA/L5/L18/L25 subcomplex. Contacts the 5S rRNA and the P site tRNA. Forms a bridge to the 30S subunit in the 70S ribosome.

In terms of biological role, this is one of the proteins that bind and probably mediate the attachment of the 5S RNA into the large ribosomal subunit, where it forms part of the central protuberance. In the 70S ribosome it contacts protein S13 of the 30S subunit (bridge B1b), connecting the 2 subunits; this bridge is implicated in subunit movement. Contacts the P site tRNA; the 5S rRNA and some of its associated proteins might help stabilize positioning of ribosome-bound tRNAs. This chain is Large ribosomal subunit protein uL5, found in Halothermothrix orenii (strain H 168 / OCM 544 / DSM 9562).